The chain runs to 440 residues: Glutamate-1-semialdehyde 2,1-aminomutase (440 aa).

Position 273 is an N6-(pyridoxal phosphate)lysine (Lys273).

The protein belongs to the class-III pyridoxal-phosphate-dependent aminotransferase family. HemL subfamily. Homodimer. It depends on pyridoxal 5'-phosphate as a cofactor.

Its subcellular location is the cytoplasm. It carries out the reaction (S)-4-amino-5-oxopentanoate = 5-aminolevulinate. It functions in the pathway porphyrin-containing compound metabolism; protoporphyrin-IX biosynthesis; 5-aminolevulinate from L-glutamyl-tRNA(Glu): step 2/2. This Alkaliphilus metalliredigens (strain QYMF) protein is Glutamate-1-semialdehyde 2,1-aminomutase.